The following is a 191-amino-acid chain: CASP-like protein 2U4 (191 aa).

The Cytoplasmic segment spans residues 1-25; that stretch reads MGAYDGAEAPRAAPASTAANSRPSR. A helical transmembrane segment spans residues 26–46; it reads LLLLHSLLLRLVAVVLSILVI. Topologically, residues 47 to 68 are extracellular; the sequence is AVMVHAKQRVMIFKAEWDNSKA. Residues 69-89 traverse the membrane as a helical segment; sequence FVALVTISAICLGYSFLQFIL. Over 90-114 the chain is Cytoplasmic; that stretch reads SAFHLCSKSWKSPTKCWAWMNFIAD. Residues 115-135 traverse the membrane as a helical segment; sequence QILTYAMLGAAAAAAELAYIA. The Extracellular portion of the chain corresponds to 136–157; that stretch reads KNGSSRAQWQPICSTFNTFCTR. Asparagine 137 carries an N-linked (GlcNAc...) asparagine glycan. Residues 158–178 form a helical membrane-spanning segment; it reads AGASIILSFIAVLALANSSAI. Topologically, residues 179-191 are cytoplasmic; sequence SAYHLFRRPSSSV.

This sequence belongs to the Casparian strip membrane proteins (CASP) family. As to quaternary structure, homodimer and heterodimers.

The protein resides in the cell membrane. The sequence is that of CASP-like protein 2U4 from Selaginella moellendorffii (Spikemoss).